We begin with the raw amino-acid sequence, 293 residues long: Beta-porphyranase B (293 aa).

The signal sequence occupies residues 1-21 (MKLSNQFLITITLLITSITFA). In terms of domain architecture, GH16 spans 38–291 (QEWKLIENMS…WVRSWQLVDS (254 aa)). 5 residues coordinate substrate: Trp67, Arg70, Glu156, Glu161, and Glu256. Glu156 functions as the Nucleophile in the catalytic mechanism. The Proton donor role is filled by Glu161.

Belongs to the glycosyl hydrolase 16 family.

The protein localises to the periplasm. It catalyses the reaction Hydrolysis of beta-D-galactopyranose-(1-&gt;4)-alpha-L-galactopyranose-6-sulfate linkages in porphyran.. Cleaves the sulfated polysaccharide porphyran at the (1-&gt;4) linkages between beta-D-galactopyranose and alpha-L-galactopyranose-6-sulfate, forming mostly the disaccharide alpha-L-galactopyranose-6-sulfate-(1-&gt;3)-beta-D-galactose. Some longer oligosaccharides of even number of residues are also observed. Inactive on the non-sulfated agarose portion of the porphyran backbone. In contrast to PorA, tolerates the presence of 3-6-anhydro-L-galactose in subsite -2. In Zobellia galactanivorans (strain DSM 12802 / CCUG 47099 / CIP 106680 / NCIMB 13871 / Dsij), this protein is Beta-porphyranase B (porB).